We begin with the raw amino-acid sequence, 74 residues long: ATP synthase subunit c (74 aa).

A run of 2 helical transmembrane segments spans residues 8-28 and 52-72; these read FIGI…VSNI and IGAG…MLLI.

The protein belongs to the ATPase C chain family. As to quaternary structure, F-type ATPases have 2 components, F(1) - the catalytic core - and F(0) - the membrane proton channel. F(1) has five subunits: alpha(3), beta(3), gamma(1), delta(1), epsilon(1). F(0) has three main subunits: a(1), b(2) and c(10-14). The alpha and beta chains form an alternating ring which encloses part of the gamma chain. F(1) is attached to F(0) by a central stalk formed by the gamma and epsilon chains, while a peripheral stalk is formed by the delta and b chains.

The protein resides in the cell inner membrane. Functionally, f(1)F(0) ATP synthase produces ATP from ADP in the presence of a proton or sodium gradient. F-type ATPases consist of two structural domains, F(1) containing the extramembraneous catalytic core and F(0) containing the membrane proton channel, linked together by a central stalk and a peripheral stalk. During catalysis, ATP synthesis in the catalytic domain of F(1) is coupled via a rotary mechanism of the central stalk subunits to proton translocation. In terms of biological role, key component of the F(0) channel; it plays a direct role in translocation across the membrane. A homomeric c-ring of between 10-14 subunits forms the central stalk rotor element with the F(1) delta and epsilon subunits. The sequence is that of ATP synthase subunit c from Rickettsia typhi (strain ATCC VR-144 / Wilmington).